We begin with the raw amino-acid sequence, 620 residues long: Probable translation initiation factor IF-2 (620 aa).

A compositionally biased stretch (acidic residues) spans 1–10; sequence MSDTDADADT. The interval 1–29 is disordered; sequence MSDTDADADTDAVSTTETSMNADANANAD. The segment covering 11-29 has biased composition (low complexity); the sequence is DAVSTTETSMNADANANAD. Residues 33–248 form the tr-type G domain; that stretch reads LRTPIVAVLG…VLMGLSQRYM (216 aa). Residues 42-49 form a G1 region; sequence GHVDHGKT. 42–49 is a GTP binding site; it reads GHVDHGKT. Residues 67-71 are G2; it reads AITQH. The interval 104 to 107 is G3; the sequence is DTPG. GTP contacts are provided by residues 104 to 108 and 158 to 161; these read DTPGH and NKVD. The interval 158–161 is G4; the sequence is NKVD. Over residues 162–183 the composition is skewed to polar residues; sequence TTPGWTPTDGSPIQPTYESQPS. The disordered stretch occupies residues 162–185; sequence TTPGWTPTDGSPIQPTYESQPSAA. The G5 stretch occupies residues 226–228; the sequence is SAI.

This sequence belongs to the TRAFAC class translation factor GTPase superfamily. Classic translation factor GTPase family. IF-2 subfamily.

Its function is as follows. Function in general translation initiation by promoting the binding of the formylmethionine-tRNA to ribosomes. Seems to function along with eIF-2. The protein is Probable translation initiation factor IF-2 of Haloquadratum walsbyi (strain DSM 16790 / HBSQ001).